The sequence spans 439 residues: MSITTMKGVTSESPAEALSRFQTTGLTLNNPKDLYWMTEFLKEEFYDKGNYYYPIKTVCDGELIETELFCPFEPKLSPHYIQLYNSRDERSNLYAVPPKKTDMKKYNRINCEKMGSLMAPNSNYDDTEMVSLFYSMMYYLNDQTAHLKLPEEDIQPELVDELNDHVLQYLSVFLSIFKPREPQDLERIWNFLDFYQPYFKKVDGKIILHEKYQGRTPPQIGLIKKITGYVLERFAPKKNITQVIYEVIRYIKGIKQEIKIRGDKSFTLSLKEYDEFRDQVTSSPMAHSITDLTYDDFSYKAYMNPLFIKLEDLTSEIITYFNDVCTCDRERLDDDPFNSVFILRDLHSLNYVKSCDLVVKHAHDKLSKFLEIKQTLLKESTNENEKKAIAQMIKTREDSLIGYTIHEICCVTNGYARDHKPLMKDYLEKNIFKKLKATN.

Positions 322, 326, 330, and 337 each coordinate Mg(2+).

It belongs to the terpene synthase family. Mg(2+) serves as cofactor.

The catalysed reaction is dimethylallyl diphosphate + L-glutamate = prekainate + diphosphate. It functions in the pathway secondary metabolite biosynthesis. Functionally, magnesium-dependent glutamate N-prenyltransferase: part of the gene cluster that mediates the biosynthesis of kainic acid (KA) and derivatives, natural products with neurochemical activity acting as ionotropic glutamate receptor (iGluR) agonists, thus being neurotoxins. Catalyzes the conversion of L-glutamic acid (L-Glu) to prekainic acid in the presence of dimethylallyl diphosphate (DMAPP). Can also use geranyl diphosphate (GPP) as substrate, thus leading to the formation of N-geranyl-L-glutamic acid (L-NGG). This is Magnesium-dependent glutamate N-prenyltransferase from Digenea simplex (Marine red alga).